A 390-amino-acid chain; its full sequence is Chorismate synthase (390 aa).

Residues R48 and R54 each coordinate NADP(+). FMN-binding positions include 132–134 (RSS), 244–245 (NA), G289, 304–308 (KPTSS), and R330. The segment at 362 to 390 (VGAHPAGAHPAGADPAGTHPGGPGGFQPG) is disordered. Positions 363 to 379 (GAHPAGAHPAGADPAGT) are enriched in low complexity. The segment covering 380-390 (HPGGPGGFQPG) has biased composition (gly residues).

This sequence belongs to the chorismate synthase family. In terms of assembly, homotetramer. Requires FMNH2 as cofactor.

The catalysed reaction is 5-O-(1-carboxyvinyl)-3-phosphoshikimate = chorismate + phosphate. Its pathway is metabolic intermediate biosynthesis; chorismate biosynthesis; chorismate from D-erythrose 4-phosphate and phosphoenolpyruvate: step 7/7. In terms of biological role, catalyzes the anti-1,4-elimination of the C-3 phosphate and the C-6 proR hydrogen from 5-enolpyruvylshikimate-3-phosphate (EPSP) to yield chorismate, which is the branch point compound that serves as the starting substrate for the three terminal pathways of aromatic amino acid biosynthesis. This reaction introduces a second double bond into the aromatic ring system. The chain is Chorismate synthase from Methylobacterium sp. (strain 4-46).